Here is a 187-residue protein sequence, read N- to C-terminus: UPF0301 protein YqgE (187 aa).

This sequence belongs to the UPF0301 (AlgH) family.

This chain is UPF0301 protein YqgE, found in Escherichia coli O7:K1 (strain IAI39 / ExPEC).